A 410-amino-acid polypeptide reads, in one-letter code: MNFDTLKKFDEEIYEVIQKETKRQRGSIELIASENFVTTAVMEAMGSQLTNKYAEGYPDKRYYGGCEEVDVAENLARNRLKKLFNAEHANVQPHSGANANIGVYFATLEPGDTVLGMNLSHGGHLTHGSPVNISGAYYNFVAYGVDSVTHRIDYEEVMRVAQEAKPKMIVAGASAYPRAIDFKKFREIADAVGAYLMVDMAHIAGLVAVGLHQNPCEYADFVTTTTHKTLRGPRGGAILCKEKYAKIIDKAIFPGLQGGPLMHVIAAKAVAFKEALEPGFKAYQEQVIKNAKALGEELKKQGFDLVSDGTDTHLLLIDLRNKNITGKDAERLFDEVGITVNKNTIPFDPQSPFVTSGIRIGTPAVTTRGMKEEEMKKIAGVMNIIIDHPEKVSEAQKVVDELCNQFKLYE.

Residues leucine 119 and 123–125 (GHL) each bind (6S)-5,6,7,8-tetrahydrofolate. N6-(pyridoxal phosphate)lysine is present on lysine 228. 351–353 (SPF) contributes to the (6S)-5,6,7,8-tetrahydrofolate binding site.

Belongs to the SHMT family. In terms of assembly, homodimer. Pyridoxal 5'-phosphate is required as a cofactor.

It is found in the cytoplasm. The catalysed reaction is (6R)-5,10-methylene-5,6,7,8-tetrahydrofolate + glycine + H2O = (6S)-5,6,7,8-tetrahydrofolate + L-serine. It functions in the pathway one-carbon metabolism; tetrahydrofolate interconversion. The protein operates within amino-acid biosynthesis; glycine biosynthesis; glycine from L-serine: step 1/1. In terms of biological role, catalyzes the reversible interconversion of serine and glycine with tetrahydrofolate (THF) serving as the one-carbon carrier. This reaction serves as the major source of one-carbon groups required for the biosynthesis of purines, thymidylate, methionine, and other important biomolecules. Also exhibits THF-independent aldolase activity toward beta-hydroxyamino acids, producing glycine and aldehydes, via a retro-aldol mechanism. This Alkaliphilus metalliredigens (strain QYMF) protein is Serine hydroxymethyltransferase.